We begin with the raw amino-acid sequence, 309 residues long: Tagatose-6-phosphate kinase (309 aa).

This sequence belongs to the carbohydrate kinase PfkB family. LacC subfamily.

It carries out the reaction D-tagatofuranose 6-phosphate + ATP = D-tagatofuranose 1,6-bisphosphate + ADP + H(+). Its pathway is carbohydrate metabolism; D-tagatose 6-phosphate degradation; D-glyceraldehyde 3-phosphate and glycerone phosphate from D-tagatose 6-phosphate: step 1/2. This Streptococcus pyogenes serotype M3 (strain SSI-1) protein is Tagatose-6-phosphate kinase.